The primary structure comprises 884 residues: MAAKRKAAAMNAVDDEPVDPSDELAFYCLGGGNEVGRSCHIIQYKGKTVMLDAGMHPAKEGFSALPFFDEFDLSTVDILLISHFHVDHSSALPYVLSKTNFKGRVFMTHATKAIYKWLIQDNVRVNNTASSSDQRTTLYTEHDHLSTLPLIETIDFNTTHTINSIRITPYPAGHVLGAAMFLISIAGLNILFTGDYSREEDRHLIPATVPRGVKIDVLITESTFGISSNPPRLEREAALMKSITGVLNRGGRVLMPVFALGRAQELLLILEEYWETHPELQKIPIYYIGNTARRCMVVYQTYIGAMNDNIKRLFRQRMAEAEASGDKSVSAGPWDFKYVRSLRSLERFDDVGGCVMLASPGMLQTGTSRELLERWAPNERNGVVMTGYSVEGTMAKQLLNEPDQIHAVMSRAATGMGRTRMNGNDEEQKIMIPRRCTVDEISFAAHVDGVENRNFIEEVSAPVVILVHGEKHQMMRLKSKLLSLNAEKTVKVKVYTPANCEEVRIPFRKDKIAKVVGKLAQTTLPTDNEDGDGPLMAGVLVQNGFDLSLMAPDDLREYAGLATTTITCKQHITLSSASMDLIKWALEGTFGAIEEIGTDEDAEKEDQQSESEEKQRMKEEADEEIPMEKPQAYLVMGCVVIRYHPRTREVELQWEGNMMNDGIADAVMAVLLTVESSPASVKQSAKHNKHHHHHHHDETDTLKFLNPHAAQDAEERFARLLMMLEAQFGSDIAPIERPRVPSSTESATTTTNGNGNSKSDSEQLSSLESKTDGATPQDPDTLSELEAAELSRLHALGIPVPGIEIKVDKHVARVWLEDLEVECANAVLRDRVRVVIERAVETVASMWSVGRSSKTITNGGGKEIAGTGADDVASKPGLEVAARA.

Zn(2+) contacts are provided by histidine 83, histidine 85, aspartate 87, histidine 88, histidine 174, and aspartate 195. Histidine 446 acts as the Proton donor in catalysis. Histidine 468 serves as a coordination point for Zn(2+). 3 disordered regions span residues 595–626, 678–705, and 734–780; these read EIGT…EEIP, PASV…LKFL, and PIER…QDPD. The segment covering 605 to 619 has biased composition (basic and acidic residues); it reads EDQQSESEEKQRMKE. A compositionally biased stretch (basic residues) spans 684-695; sequence SAKHNKHHHHHH. Residues 742 to 758 show a composition bias toward low complexity; sequence SSTESATTTTNGNGNSK. Over residues 762–780 the composition is skewed to polar residues; it reads EQLSSLESKTDGATPQDPD.

Belongs to the metallo-beta-lactamase superfamily. RNA-metabolizing metallo-beta-lactamase-like family. CPSF2/YSH1 subfamily.

It is found in the nucleus. Component of the cleavage factor I (CF I) involved in pre-mRNA 3'-end processing. The polypeptide is Endoribonuclease ysh1 (ysh1) (Emericella nidulans (strain FGSC A4 / ATCC 38163 / CBS 112.46 / NRRL 194 / M139) (Aspergillus nidulans)).